The following is a 314-amino-acid chain: GTPase-interacting component 1 (314 aa).

3 disordered regions span residues 112-156, 199-221, and 241-261; these read SRRH…KHDV, TMDSHHDGNETNNTPNGNKQLDS, and LGDSVSEKTNPSSPSVSSFSG. Residues 126-139 enclose the CRIB domain; that stretch reads ISTPFDFHHISHAN. Residues 140 to 156 are compositionally biased toward basic and acidic residues; it reads GKREDNPLESHEEKHDV. The segment covering 208 to 221 has biased composition (polar residues); the sequence is ETNNTPNGNKQLDS. Positions 251-260 are enriched in low complexity; it reads PSSPSVSSFS.

It belongs to the BORG/CEP family. Interacts with GTP-bound CDC42.

The protein resides in the bud neck. The protein localises to the bud tip. It is found in the cytoplasm. It localises to the cell cortex. Its subcellular location is the cytoskeleton. Required for cell size and shape control, bud site selection, bud emergence, actin cytoskeletal organization, mitotic spindle orientation/positioning, and mating projection formation in response to mating pheromone. The protein is GTPase-interacting component 1 (GIC1) of Saccharomyces cerevisiae (strain ATCC 204508 / S288c) (Baker's yeast).